A 168-amino-acid polypeptide reads, in one-letter code: Protein-export protein SecB (168 aa).

It belongs to the SecB family. As to quaternary structure, homotetramer, a dimer of dimers. One homotetramer interacts with 1 SecA dimer.

The protein localises to the cytoplasm. One of the proteins required for the normal export of preproteins out of the cell cytoplasm. It is a molecular chaperone that binds to a subset of precursor proteins, maintaining them in a translocation-competent state. It also specifically binds to its receptor SecA. The protein is Protein-export protein SecB of Haemophilus influenzae (strain PittGG).